The following is a 298-amino-acid chain: 4-hydroxy-tetrahydrodipicolinate synthase (298 aa).

Thr51 provides a ligand contact to pyruvate. The active-site Proton donor/acceptor is Tyr139. Lys167 serves as the catalytic Schiff-base intermediate with substrate. Residue Ile209 coordinates pyruvate.

It belongs to the DapA family. In terms of assembly, homotetramer; dimer of dimers.

The protein localises to the cytoplasm. The enzyme catalyses L-aspartate 4-semialdehyde + pyruvate = (2S,4S)-4-hydroxy-2,3,4,5-tetrahydrodipicolinate + H2O + H(+). Its pathway is amino-acid biosynthesis; L-lysine biosynthesis via DAP pathway; (S)-tetrahydrodipicolinate from L-aspartate: step 3/4. Its function is as follows. Catalyzes the condensation of (S)-aspartate-beta-semialdehyde [(S)-ASA] and pyruvate to 4-hydroxy-tetrahydrodipicolinate (HTPA). The protein is 4-hydroxy-tetrahydrodipicolinate synthase of Pasteurella multocida (strain Pm70).